We begin with the raw amino-acid sequence, 504 residues long: MEATGTWALLLALALLLLLTLALSGTRARGHLPPGPTPLPLLGNLLQLRPGALYSGLMRLSKKYGPVFTIYLGPWRPVVVLVGQEAVREALGGQAEEFSGRGTVAMLEGTFDGHGVFFSNGERWRQLRKFTMLALRDLGMGKREGEELIQAEARCLVETFQGTEGRPFDPSLLLAQATSNVVCSLLFGLRFSYEDKEFQAVVRAAGGTLLGVSSQGGQTYEMFSWFLRPLPGPHKQLLHHVSTLAAFTVRQVQQHQGNLDASGPARDLVDAFLLKMAQEEQNPGTEFTNKNMLMTVIYLLFAGTMTVSTTVGYTLLLLMKYPHVQKWVREELNRELGAGQAPSLGDRTRLPYTDAVLHEAQRLLALVPMGIPRTLMRTTRFRGYTLPQGTEVFPLLGSILHDPNIFKHPEEFNPDRFLDADGRFRKHEAFLPFSLGKRVCLGEGLAKAELFLFFTTILQAFSLESPCPPDTLSLKPTVSGLFNIPPAFQLQVRPTDLHSTTQTR.

Residue Cys-440 coordinates heme.

Belongs to the cytochrome P450 family. Heme serves as cofactor. In terms of tissue distribution, expressed at higher levels in extrahepatic tissues including trachea, lung, stomach, small intestine, colon, kidney, breast, placenta and spleen. Expressed in peripheral blood leukocytes. Constitutively expressed in skin (at protein level).

It localises to the endoplasmic reticulum membrane. It is found in the microsome membrane. It carries out the reaction all-trans-retinoate + reduced [NADPH--hemoprotein reductase] + O2 = all-trans-5,6-epoxyretinoate + oxidized [NADPH--hemoprotein reductase] + H2O + H(+). The enzyme catalyses all-trans-retinoate + reduced [NADPH--hemoprotein reductase] + O2 = all-trans-4-hydroxyretinoate + oxidized [NADPH--hemoprotein reductase] + H2O + H(+). It catalyses the reaction (5S)-hydroperoxy-(6E,8Z,11Z,14Z)-eicosatetraenoate = 5-oxo-(6E,8Z,11Z,14Z)-eicosatetraenoate + H2O. The catalysed reaction is (12S)-hydroperoxy-(5Z,8Z,10E,14Z)-eicosatetraenoate = 12-oxo-(5Z,8Z,10E,14Z)-eicosatetraenoate + H2O. It carries out the reaction (15S)-hydroperoxy-(5Z,8Z,11Z,13E)-eicosatetraenoate = 15-oxo-(5Z,8Z,11Z,13E)-eicosatetraenoate + H2O. The enzyme catalyses prostaglandin H2 = thromboxane A2. It catalyses the reaction prostaglandin H2 = (12S)-hydroxy-(5Z,8E,10E)-heptadecatrienoate + malonaldehyde. The catalysed reaction is (13S)-hydroperoxy-(9Z,11E)-octadecadienoate = 13-oxo-(9Z,11E)-octadecadienoate + H2O. It functions in the pathway lipid metabolism; fatty acid metabolism. A cytochrome P450 monooxygenase involved in the metabolism of retinoids and eicosanoids. In epidermis, may contribute to the oxidative metabolism of all-trans-retinoic acid. For this activity, uses molecular oxygen inserting one oxygen atom into a substrate, and reducing the second into a water molecule, with two electrons provided by NADPH via cytochrome P450 reductase (NADPH--hemoprotein reductase). Additionally, displays peroxidase and isomerase activities toward various oxygenated eicosanoids such as prostaglandin H2 (PGH2) and hydroperoxyeicosatetraenoates (HPETEs). Independently of cytochrome P450 reductase, NADPH, and O2, catalyzes the breakdown of PGH2 to hydroxyheptadecatrienoic acid (HHT) and malondialdehyde (MDA), which is known to act as a mediator of DNA damage. This chain is Cytochrome P450 2S1, found in Homo sapiens (Human).